Consider the following 501-residue polypeptide: Histone deacetylase 19 (501 aa).

A histone deacetylase region spans residues 17-329 (RKVCYFYDPE…WCYETGVALG (313 aa)). The active-site Proton donor/acceptor is H149. The Zn(2+) site is built by D184, H186, and D272. The disordered stretch occupies residues 383–501 (HAPSVPFQER…GAEQAFPPKT (119 aa)). Residues 397–407 (ETPEVDEDQED) are compositionally biased toward acidic residues. S416 carries the post-translational modification Phosphoserine. Basic and acidic residues-rich tracts occupy residues 422–457 (DDRKPIPSRVKREAVEPDTKDKDGLKGIMERGKGCE) and 479–488 (ASVKMEEEGT).

The protein belongs to the histone deacetylase family. HD type 1 subfamily. Interacts with SIN3, SAP18 and TPR1. Interacts with CDKE-1, MED14 and LUG. Interacts with TPL. Interacts with AHL22. Zn(2+) serves as cofactor. In terms of tissue distribution, highly expressed in leaves, stems, flowers and young siliques.

It is found in the nucleus. The enzyme catalyses N(6)-acetyl-L-lysyl-[histone] + H2O = L-lysyl-[histone] + acetate. In terms of biological role, responsible for the deacetylation of lysine residues on the N-terminal part of the core histones (H2A, H2B, H3 and H4). Histone deacetylation gives a tag for epigenetic repression and plays an important role in transcriptional regulation, cell cycle progression and developmental events. Histone deacetylases act via the formation of large multiprotein complexes. HDA19 is involved in jasmonic acid and ethylene signaling of pathogen response. Part of a repressor complex including APETALA2 (AP2) and TOPLESS (TPL) that control the expression domains of numerous floral organ identity genes. Involved in negative regulation of salinity stress response. Represses the expression of stress tolerance-related genes, genes coding for late embryogenesis abundant (LEA) proteins that prevent protein aggregation, and positive regulators of abscisic acid (ABA) signaling, such as ABI5 and NAC019. In Arabidopsis thaliana (Mouse-ear cress), this protein is Histone deacetylase 19.